The sequence spans 151 residues: 3-hydroxyacyl-[acyl-carrier-protein] dehydratase FabZ (151 aa).

The active site involves His-54.

The protein belongs to the thioester dehydratase family. FabZ subfamily.

It is found in the cytoplasm. The catalysed reaction is a (3R)-hydroxyacyl-[ACP] = a (2E)-enoyl-[ACP] + H2O. Involved in unsaturated fatty acids biosynthesis. Catalyzes the dehydration of short chain beta-hydroxyacyl-ACPs and long chain saturated and unsaturated beta-hydroxyacyl-ACPs. The polypeptide is 3-hydroxyacyl-[acyl-carrier-protein] dehydratase FabZ (Erwinia tasmaniensis (strain DSM 17950 / CFBP 7177 / CIP 109463 / NCPPB 4357 / Et1/99)).